The sequence spans 73 residues: MWFCIDLGADAFEEAGALAGKKNKRALQHILGLNIFKQELIPPCKDPDPFQIQLLLKNYTLKNVSTIFSYYCQ.

It belongs to the asfivirus DP63R family.

This is an uncharacterized protein from Ornithodoros (relapsing fever ticks).